Here is a 537-residue protein sequence, read N- to C-terminus: Phosphoenolpyruvate carboxykinase (ATP) (537 aa).

Substrate is bound by residues Arg61, Tyr195, and Lys201. ATP-binding positions include Lys201, His220, and 236–244; that span reads GLSGTGKTT. Mn(2+) is bound by residues Lys201 and His220. Residue Asp257 participates in Mn(2+) binding. ATP-binding residues include Glu285, Arg323, and Thr448. Substrate is bound at residue Arg323.

The protein belongs to the phosphoenolpyruvate carboxykinase (ATP) family. Requires Mn(2+) as cofactor.

It localises to the cytoplasm. It carries out the reaction oxaloacetate + ATP = phosphoenolpyruvate + ADP + CO2. The protein operates within carbohydrate biosynthesis; gluconeogenesis. Its function is as follows. Involved in the gluconeogenesis. Catalyzes the conversion of oxaloacetate (OAA) to phosphoenolpyruvate (PEP) through direct phosphoryl transfer between the nucleoside triphosphate and OAA. This Azorhizobium caulinodans (strain ATCC 43989 / DSM 5975 / JCM 20966 / LMG 6465 / NBRC 14845 / NCIMB 13405 / ORS 571) protein is Phosphoenolpyruvate carboxykinase (ATP).